We begin with the raw amino-acid sequence, 396 residues long: Phosphoglycerate kinase (396 aa).

Substrate contacts are provided by residues 21–23 (DFN), Arg36, 59–62 (HLGK), Arg119, and Arg156. ATP is bound by residues Lys206, Glu325, and 352-355 (GGDS).

The protein belongs to the phosphoglycerate kinase family. In terms of assembly, monomer.

It is found in the cytoplasm. It carries out the reaction (2R)-3-phosphoglycerate + ATP = (2R)-3-phospho-glyceroyl phosphate + ADP. Its pathway is carbohydrate degradation; glycolysis; pyruvate from D-glyceraldehyde 3-phosphate: step 2/5. This chain is Phosphoglycerate kinase, found in Macrococcus caseolyticus (strain JCSC5402) (Macrococcoides caseolyticum).